A 248-amino-acid polypeptide reads, in one-letter code: 2,3-bisphosphoglycerate-dependent phosphoglycerate mutase (248 aa).

Residues 8 to 15 (RHGESTWN), 21 to 22 (TG), Arg-60, 87 to 90 (ERHY), Lys-98, 114 to 115 (RR), and 183 to 184 (GN) contribute to the substrate site. Catalysis depends on His-9, which acts as the Tele-phosphohistidine intermediate. Glu-87 serves as the catalytic Proton donor/acceptor.

Belongs to the phosphoglycerate mutase family. BPG-dependent PGAM subfamily. As to quaternary structure, homodimer.

The catalysed reaction is (2R)-2-phosphoglycerate = (2R)-3-phosphoglycerate. It functions in the pathway carbohydrate degradation; glycolysis; pyruvate from D-glyceraldehyde 3-phosphate: step 3/5. Functionally, catalyzes the interconversion of 2-phosphoglycerate and 3-phosphoglycerate. This chain is 2,3-bisphosphoglycerate-dependent phosphoglycerate mutase, found in Paraburkholderia phytofirmans (strain DSM 17436 / LMG 22146 / PsJN) (Burkholderia phytofirmans).